Here is a 350-residue protein sequence, read N- to C-terminus: Bifunctional methylenetetrahydrofolate dehydrogenase/cyclohydrolase, mitochondrial (350 aa).

The N-terminal 35 residues, M1–N35, are a transit peptide targeting the mitochondrion. K50 carries the N6-acetyllysine; alternate modification. K50 participates in a covalent cross-link: Glycyl lysine isopeptide (Lys-Gly) (interchain with G-Cter in SUMO2); alternate. Residues Y84–K88 and V131–L133 each bind substrate. NAD(+)-binding positions include G200–S202 and R233. P309–G313 serves as a coordination point for substrate.

It belongs to the tetrahydrofolate dehydrogenase/cyclohydrolase family. In terms of assembly, homodimer. It depends on Mg(2+) as a cofactor.

The protein resides in the mitochondrion. The enzyme catalyses (6R)-5,10-methylene-5,6,7,8-tetrahydrofolate + NAD(+) = (6R)-5,10-methenyltetrahydrofolate + NADH. It catalyses the reaction (6R)-5,10-methenyltetrahydrofolate + H2O = (6R)-10-formyltetrahydrofolate + H(+). Although its dehydrogenase activity is NAD-specific, it can also utilize NADP at a reduced efficiency. This is Bifunctional methylenetetrahydrofolate dehydrogenase/cyclohydrolase, mitochondrial (MTHFD2) from Homo sapiens (Human).